The chain runs to 113 residues: Nucleoid-associated protein Syncc9902_0023 (113 aa).

The protein belongs to the YbaB/EbfC family. In terms of assembly, homodimer.

Its subcellular location is the cytoplasm. The protein localises to the nucleoid. Binds to DNA and alters its conformation. May be involved in regulation of gene expression, nucleoid organization and DNA protection. This Synechococcus sp. (strain CC9902) protein is Nucleoid-associated protein Syncc9902_0023.